Reading from the N-terminus, the 299-residue chain is uncharacterized protein (299 aa).

A helical transmembrane segment spans residues 25–45; sequence LLYFFKSLAMILFFIFFSLTS.

It is found in the membrane. This is an uncharacterized protein from Rickettsia prowazekii (strain Madrid E).